Here is a 488-residue protein sequence, read N- to C-terminus: Stress activated transcription factor atfs-1 (488 aa).

A mitochondrion-targeting transit peptide spans 1-23 (MFSRVGRLTTFGAQAVSNCPFRR). The segment at 138-191 (SWQNGSSVGHPHGHQQQQQTCQQPPTHSSTTETMHDFSNFGDNMGSPLFQSPSK) is disordered. The span at 142 to 168 (GSSVGHPHGHQQQQQTCQQPPTHSSTT) shows a compositional bias: low complexity. A Glycyl lysine isopeptide (Lys-Gly) (interchain with G-Cter in smo-1) cross-link involves residue lysine 342. A disordered region spans residues 353 to 400 (QRDDDDEDYIPASEARRTSSRLNRKSATPTYLRRRDSERSWTPASDDY). The bZIP domain maps to 420 to 483 (DEETDRRRML…NSMKKELRKM (64 aa)). The interval 425–460 (RRRMLNRIAAVRYREKKRAEKKGRKMEFQEVADRNR) is basic motif. The Nuclear localization signal signature appears at 436-441 (RYREKK). The interval 462-469 (LLQKERQL) is leucine-zipper.

The protein belongs to the bZIP family. Post-translationally, may be desumoylated by ulp-4. Ubiquitously expressed.

It is found in the mitochondrion matrix. Its subcellular location is the cytoplasm. It localises to the nucleus. Its function is as follows. Acts as a transcription factor during mitochondrial stress by activating the mitochondrial unfolded protein response (mtUPR). Induces nuclear and mitochondrial gene transcription, including genes coding for mitochondrial chaperones and proteins involved in glycolysis, amino acid catabolism and innate immunity. Following mitochondrial stress, restores mitochondrial respiratory capacity by limiting the transcription of oxidative phosphorylation (OXPHOS) machinery genes and by promoting the assembly of OXPHOS complexes via the up-regulation of chaperone and assembly factor genes. Component of a feedback loop involving atfs-1, atgl-1 and hlh-11. Acts together with flp-7 to negatively regulate the expression of the transcription regulator hlh-11, to promote expression of atgl-1, and thus atgl-1-dependent fat oxidation in response to mitochondrial stress. In addition, functions with hlh-11 to maintain lifespan. Promotes mtDNA maintenance and propagation of deleterious mtDNA. In Caenorhabditis elegans, this protein is Stress activated transcription factor atfs-1.